A 309-amino-acid chain; its full sequence is Taste receptor type 2 member 8 (309 aa).

Residues 1 to 7 (MFSPADN) lie on the Extracellular side of the membrane. A helical transmembrane segment spans residues 8 to 28 (IFIILITGEFILGILGNGYIA). Topologically, residues 29–50 (LVNWIDWIKKKKISTVDYILTN) are cytoplasmic. Residues 51-71 (LVIARICLISVMVVNGIVIVL) form a helical membrane-spanning segment. At 72–82 (NPDVYTKNKQQ) the chain is on the extracellular side. The chain crosses the membrane as a helical span at residues 83–103 (IVIFTFWTFANYLNMWITTCL). Over 104 to 131 (NVFYFLKIASSSHPLFLWLKWKIDMVVH) the chain is Cytoplasmic. Residues 132–152 (WILLGCFAISLLVSLIAAIVL) traverse the membrane as a helical segment. The Extracellular portion of the chain corresponds to 153 to 184 (SCDYRFHAIAKHKRNITEMFXVSKIPYFEPLT). An N-linked (GlcNAc...) asparagine glycan is attached at N167. A helical membrane pass occupies residues 185 to 205 (LFNLFAIVPFIVSLISFFLLV). Over 206–239 (RSLWRHTKQIKLYATGSRDPSTEVHVRAIKTMTS) the chain is Cytoplasmic. The helical transmembrane segment at 240-260 (FIFFFFLYFISSILMTFSYLM) threads the bilayer. Over 261–266 (TKYKLA) the chain is Extracellular. A helical transmembrane segment spans residues 267–287 (VEFGEIAAILYPLGHSLILIV). The Cytoplasmic segment spans residues 288-309 (LNNKLRQIFVRMLTCRKIACVI).

Belongs to the G-protein coupled receptor T2R family.

Its subcellular location is the membrane. In terms of biological role, receptor that may play a role in the perception of bitterness and is gustducin-linked. May play a role in sensing the chemical composition of the gastrointestinal content. The activity of this receptor may stimulate alpha gustducin, mediate PLC-beta-2 activation and lead to the gating of TRPM5. The protein is Taste receptor type 2 member 8 (TAS2R8) of Pan troglodytes (Chimpanzee).